We begin with the raw amino-acid sequence, 277 residues long: Endochitinase CHI (277 aa).

The N-terminal stretch at 1-31 (MAKPTSRNDRFALFFITLIFLILTVSKPVAS) is a signal peptide. A Chitin-binding type-1 domain is found at 32–66 (QNCGCASDFCCSKYGYCGTTDEFCGEGCQAGPCRS). 4 cysteine pairs are disulfide-bonded: C34/C42, C36/C48, C41/C55, and C59/C64. The catalytic stretch occupies residues 75–277 (VSLEGTVTPD…GVAPGDNLTC (203 aa)). E136 acts as the Proton donor in catalysis. N274 is a glycosylation site (N-linked (GlcNAc...) asparagine).

The protein belongs to the glycosyl hydrolase 19 family. Chitinase class I subfamily.

The enzyme catalyses Random endo-hydrolysis of N-acetyl-beta-D-glucosaminide (1-&gt;4)-beta-linkages in chitin and chitodextrins.. In Arabidopsis thaliana (Mouse-ear cress), this protein is Endochitinase CHI.